A 525-amino-acid polypeptide reads, in one-letter code: ESX-1 secretion-associated protein EspE (525 aa).

Disordered regions lie at residues 244 to 341 (AVAG…PGAA) and 375 to 494 (ALQA…APVH). The segment covering 248–258 (DADDTTADDTA) has biased composition (acidic residues). The segment covering 274-286 (ETSKEDGQSRHEN) has biased composition (basic and acidic residues). Gly residues predominate over residues 292–306 (SGGGGGATSGGGGGA). Composition is skewed to low complexity over residues 307–319 (PSSASSAGPAGTP), 332–341 (TPTDAQPGAA), and 375–397 (ALQAATQAGAQAAQLAGQAAAAP). Residues 411–440 (DPDAEGDKDSDKRDGEGKEDGTAPRDREST) are compositionally biased toward basic and acidic residues.

It localises to the cytoplasm. This is ESX-1 secretion-associated protein EspE from Mycolicibacterium smegmatis (strain ATCC 700084 / mc(2)155) (Mycobacterium smegmatis).